Reading from the N-terminus, the 95-residue chain is Small ribosomal subunit protein bS16 (95 aa).

The protein belongs to the bacterial ribosomal protein bS16 family.

The sequence is that of Small ribosomal subunit protein bS16 from Mycoplasma genitalium (strain ATCC 33530 / DSM 19775 / NCTC 10195 / G37) (Mycoplasmoides genitalium).